The following is a 505-amino-acid chain: Protein amnionless (505 aa).

Positions 1–20 are cleaved as a signal peptide; that stretch reads MGLHWQWLIWALVGLHVALA. Over 21 to 344 the chain is Extracellular; sequence TKWYGGGMDF…RPYNPNVSFS (324 aa). A helical membrane pass occupies residues 345–365; that stretch reads SIVLILFCMALVGLVSVVILA. At 366 to 505 the chain is on the cytoplasmic side; sequence HFMPENPYLN…CEADTDEETI (140 aa). A disordered region spans residues 451 to 482; the sequence is GALEEAAKESQEQDEILSVPKMETGDLDARSV. A compositionally biased stretch (basic and acidic residues) spans 473–482; sequence ETGDLDARSV.

As to expression, specifically expressed in nephrocytes.

It is found in the cell membrane. Its function is as follows. Required in the nephrocyte for normal uptake of proteins and elimination of toxins, and for maintenance of endocytic trafficking structures. May function together with Cubn. The sequence is that of Protein amnionless from Drosophila melanogaster (Fruit fly).